A 241-amino-acid chain; its full sequence is Histone H1-II (241 aa).

A compositionally biased stretch (basic and acidic residues) spans 1–10; the sequence is MASDAPEVKA. 2 disordered regions span residues 1-27 and 89-241; these read MASDAPEVKAPKAKTQKKPKTAPTHPP and NSYK…AKKA. The span at 11-20 shows a compositional bias: basic residues; the sequence is PKAKTQKKPK. Residues 24 to 95 form the H15 domain; sequence THPPYIQMVT…KVKNSYKLSD (72 aa). Positions 99–111 are enriched in basic residues; the sequence is SKAKAAAKPKAAP. Tandem repeats lie at residues 111–116, 117–122, and 123–128. The segment at 111 to 217 is 8 X 6 AA repeats of P-K-K-A-[AK]-A; it reads PKKAAAPKKA…KAATPKKAKA (107 aa). The span at 129–155 shows a compositional bias: basic and acidic residues; that stretch reads PKKEGEKKAVKPKSEKKAAKPKTEKKP. Basic residues-rich tracts occupy residues 156 to 184 and 194 to 241; these read KAAKKPKAAKKPAAKKPAAKKPAAKKATP and AAPK…AKKA. Residues 183-186 mediate DNA binding; it reads TPKK. Repeat copies occupy residues 184–189, 190–195, 196–201, 204–209, and 212–217. DNA-binding regions lie at residues 203 to 206 and 211 to 214; these read TPKK.

It belongs to the histone H1/H5 family.

The protein localises to the nucleus. It localises to the chromosome. Functionally, histones H1 are necessary for the condensation of nucleosome chains into higher-order structures. The polypeptide is Histone H1-II (H1-II) (Volvox carteri (Green alga)).